Here is a 546-residue protein sequence, read N- to C-terminus: Chaperonin GroEL (546 aa).

ATP is bound by residues 30–33 (TLGP), Lys-51, 87–91 (DGTTT), Gly-415, 479–481 (NAA), and Asp-495.

It belongs to the chaperonin (HSP60) family. Forms a cylinder of 14 subunits composed of two heptameric rings stacked back-to-back. Interacts with the co-chaperonin GroES.

It localises to the cytoplasm. The enzyme catalyses ATP + H2O + a folded polypeptide = ADP + phosphate + an unfolded polypeptide.. In terms of biological role, together with its co-chaperonin GroES, plays an essential role in assisting protein folding. The GroEL-GroES system forms a nano-cage that allows encapsulation of the non-native substrate proteins and provides a physical environment optimized to promote and accelerate protein folding. This Pseudomonas putida (strain W619) protein is Chaperonin GroEL.